The sequence spans 413 residues: MVATAVTSAFFPVTSSPDSSDSKNKKLGSIKSKPSVSSGSLQVKANAQAPPKINGTVASTTPVEGSKNDDGASSPPPRTFINQLPDWSMLLAAITTIFLAAEKQWMMLDWKPRRPDMVIDPFGIGKIVQDGLVFSQNFSIRSYEIGADQTASIETLMNHLQETAINHCRSAGLLGEGFGATPEMCKKNLIWVVTRMQVVVDRYPTWGDVVQVDTWVSASGKNGMRRDWLVSNSETGEILTRATSVWVMMNKLTRRLSKIPEEVRGEIEPFFMNSDPVLAEDSQKLVKLDDSTAEHVCKGLTPKWSDLDVNQHVNNVKYIGWILESAPLPILESHELSALTLEYRRECGRDSVLQSLTTVSDSNTENAVNVGEFNCQHLLRLDDGAEIVRGRTRWRPKHAKSSANMDQITAKRA.

Residues 1–57 (MVATAVTSAFFPVTSSPDSSDSKNKKLGSIKSKPSVSSGSLQVKANAQAPPKINGTV) constitute a chloroplast transit peptide. The segment at 12–79 (PVTSSPDSSD…DGASSPPPRT (68 aa)) is disordered. The segment covering 29 to 40 (SIKSKPSVSSGS) has biased composition (low complexity). Catalysis depends on residues N310, H312, and C347. The disordered stretch occupies residues 394 to 413 (WRPKHAKSSANMDQITAKRA).

The protein belongs to the acyl-ACP thioesterase family.

Its subcellular location is the plastid. The protein localises to the chloroplast. It carries out the reaction hexadecanoyl-[ACP] + H2O = hexadecanoate + holo-[ACP] + H(+). In terms of biological role, plays an essential role in chain termination during de novo fatty acid synthesis. High thioesterase activity for palmitoyl-ACP versus other acyl-ACPs. The sequence is that of Palmitoyl-acyl carrier protein thioesterase, chloroplastic (FATB1) from Gossypium hirsutum (Upland cotton).